Reading from the N-terminus, the 600-residue chain is Adenine deaminase (600 aa).

It belongs to the metallo-dependent hydrolases superfamily. Adenine deaminase family. Mn(2+) serves as cofactor.

The catalysed reaction is adenine + H2O + H(+) = hypoxanthine + NH4(+). The sequence is that of Adenine deaminase from Roseobacter denitrificans (strain ATCC 33942 / OCh 114) (Erythrobacter sp. (strain OCh 114)).